A 424-amino-acid chain; its full sequence is Histidine--tRNA ligase (424 aa).

Belongs to the class-II aminoacyl-tRNA synthetase family. In terms of assembly, homodimer.

The protein resides in the cytoplasm. The catalysed reaction is tRNA(His) + L-histidine + ATP = L-histidyl-tRNA(His) + AMP + diphosphate + H(+). This chain is Histidine--tRNA ligase, found in Staphylococcus epidermidis (strain ATCC 12228 / FDA PCI 1200).